Consider the following 214-residue polypeptide: Dephospho-CoA kinase (214 aa).

The region spanning 4-204 (IVGLTGGIGS…QRYLQLAQQK (201 aa)) is the DPCK domain. 12–17 (GSGKST) serves as a coordination point for ATP.

Belongs to the CoaE family.

The protein resides in the cytoplasm. It catalyses the reaction 3'-dephospho-CoA + ATP = ADP + CoA + H(+). It participates in cofactor biosynthesis; coenzyme A biosynthesis; CoA from (R)-pantothenate: step 5/5. Catalyzes the phosphorylation of the 3'-hydroxyl group of dephosphocoenzyme A to form coenzyme A. The polypeptide is Dephospho-CoA kinase (Mannheimia succiniciproducens (strain KCTC 0769BP / MBEL55E)).